We begin with the raw amino-acid sequence, 283 residues long: Phosphatidylglycerol--prolipoprotein diacylglyceryl transferase (283 aa).

A run of 7 helical transmembrane segments spans residues L18–G38, L59–Y79, I91–A111, I124–L144, T185–W205, Y213–E233, and G251–I271. An a 1,2-diacyl-sn-glycero-3-phospho-(1'-sn-glycerol)-binding site is contributed by R143.

It belongs to the Lgt family.

It localises to the cell inner membrane. It carries out the reaction L-cysteinyl-[prolipoprotein] + a 1,2-diacyl-sn-glycero-3-phospho-(1'-sn-glycerol) = an S-1,2-diacyl-sn-glyceryl-L-cysteinyl-[prolipoprotein] + sn-glycerol 1-phosphate + H(+). It participates in protein modification; lipoprotein biosynthesis (diacylglyceryl transfer). In terms of biological role, catalyzes the transfer of the diacylglyceryl group from phosphatidylglycerol to the sulfhydryl group of the N-terminal cysteine of a prolipoprotein, the first step in the formation of mature lipoproteins. The sequence is that of Phosphatidylglycerol--prolipoprotein diacylglyceryl transferase from Porphyromonas gingivalis (strain ATCC 33277 / DSM 20709 / CIP 103683 / JCM 12257 / NCTC 11834 / 2561).